A 210-amino-acid polypeptide reads, in one-letter code: Outer-membrane lipoprotein carrier protein (210 aa).

The first 22 residues, methionine 1 to alanine 22, serve as a signal peptide directing secretion.

Belongs to the LolA family. In terms of assembly, monomer.

It localises to the periplasm. In terms of biological role, participates in the translocation of lipoproteins from the inner membrane to the outer membrane. Only forms a complex with a lipoprotein if the residue after the N-terminal Cys is not an aspartate (The Asp acts as a targeting signal to indicate that the lipoprotein should stay in the inner membrane). This is Outer-membrane lipoprotein carrier protein from Chromohalobacter salexigens (strain ATCC BAA-138 / DSM 3043 / CIP 106854 / NCIMB 13768 / 1H11).